The following is a 134-amino-acid chain: DNA-binding protein H-NS homolog (134 aa).

The tract at residues 106–134 (HKTWTGQGRTPRPIQNALNKGKSLSDFEI) is disordered. The DNA-binding element occupies 112 to 117 (QGRTPR).

The protein belongs to the histone-like protein H-NS family. In terms of assembly, homodimer that oligomerizes on DNA into higher-order complexes that form bridges between disparate regions of DNA compacting it.

The protein resides in the cytoplasm. It localises to the nucleoid. Its function is as follows. A DNA-binding protein implicated in transcriptional repression and chromosome organization and compaction. Binds nucleation sites in AT-rich DNA and bridges them, forming higher-order nucleoprotein complexes and condensing the chromosome. As many horizontally transferred genes are AT-rich, it plays a central role in silencing foreign genes. A subset of genes are repressed by H-NS in association with other proteins. The polypeptide is DNA-binding protein H-NS homolog (hns) (Haemophilus influenzae (strain ATCC 51907 / DSM 11121 / KW20 / Rd)).